The sequence spans 478 residues: ATP synthase subunit beta (478 aa).

164–171 (GGAGVGKT) is a binding site for ATP.

It belongs to the ATPase alpha/beta chains family. F-type ATPases have 2 components, CF(1) - the catalytic core - and CF(0) - the membrane proton channel. CF(1) has five subunits: alpha(3), beta(3), gamma(1), delta(1), epsilon(1). CF(0) has three main subunits: a(1), b(2) and c(9-12). The alpha and beta chains form an alternating ring which encloses part of the gamma chain. CF(1) is attached to CF(0) by a central stalk formed by the gamma and epsilon chains, while a peripheral stalk is formed by the delta and b chains.

It localises to the cell membrane. The catalysed reaction is ATP + H2O + 4 H(+)(in) = ADP + phosphate + 5 H(+)(out). Functionally, produces ATP from ADP in the presence of a proton gradient across the membrane. The catalytic sites are hosted primarily by the beta subunits. This chain is ATP synthase subunit beta, found in Corynebacterium kroppenstedtii (strain DSM 44385 / JCM 11950 / CIP 105744 / CCUG 35717).